A 273-amino-acid chain; its full sequence is MSLQQTIEQAFENRNEYSPATMPQDVRDAINQVLEQLDNGTLRVAEKKDGEWVVNQWAKKAVLLSFRLNDNYVQAAGEHIQFYDKVPTKFADWTEAQFKEAGVRVVPPAVARKGSYIAPGAVLMPSYVNIGAYVDQGAMVDTWATVGSCAQIGKNVHLSGGVGIGGVLEPLQANPTIIEDNCFIGARSEIVEGVIVEEGAVISMGVYIGQSTRIYDRETGEIHRGRVPAGSVVVPGSLPSEDGTHSLYAAIIVKKVDAQTRAKTSVNELLRLA.

Substrate is bound by residues Arg-104 and Asp-141.

The protein belongs to the transferase hexapeptide repeat family. Homotrimer.

The protein localises to the cytoplasm. It catalyses the reaction (S)-2,3,4,5-tetrahydrodipicolinate + succinyl-CoA + H2O = (S)-2-succinylamino-6-oxoheptanedioate + CoA. It participates in amino-acid biosynthesis; L-lysine biosynthesis via DAP pathway; LL-2,6-diaminopimelate from (S)-tetrahydrodipicolinate (succinylase route): step 1/3. In Psychrobacter arcticus (strain DSM 17307 / VKM B-2377 / 273-4), this protein is 2,3,4,5-tetrahydropyridine-2,6-dicarboxylate N-succinyltransferase.